Consider the following 126-residue polypeptide: Diadenosine hexaphosphate hydrolase (126 aa).

The region spanning 1-121 is the Nudix hydrolase domain; that stretch reads MELGAGGVVF…EDLGLLEVAL (121 aa). Residues 21–23 and 30–32 each bind substrate; these read DRM and KGH. The Nudix box motif lies at 31 to 52; the sequence is GHPEPGESLEEAAVREVWEETG. The Mg(2+) site is built by E46 and E50. Substrate-binding positions include 66 to 68, R74, and E112; that span reads YVN.

This sequence belongs to the Nudix hydrolase family. Monomer. The cofactor is Mg(2+).

It carries out the reaction P(1),P(6)-bis(5'-adenosyl) hexaphosphate + H2O = 2 ATP + 2 H(+). It catalyses the reaction P(1),P(5)-bis(5'-adenosyl) pentaphosphate + H2O = ADP + ATP + 2 H(+). The catalysed reaction is P(1),P(4)-bis(5'-adenosyl) tetraphosphate + H2O = AMP + ATP + 2 H(+). Strongly inhibited by fluoride ions. Specifically hydrolyzes (di)adenosine polyphosphates but not ATP or diadenosine triphosphate, generating ATP as the product. Diadenosine hexaphosphate (Ap6A) is the preferred substrate and hydrolysis yields 2 ATP. It is the only enzyme that symmetrically hydrolyzes Ap6A. It also hydrolyzes diadenosine pentaphosphate (Ap5A), diadenosine tetraphosphate (Ap4A) and adenosine tetraphosphate (p4A). This Thermus thermophilus protein is Diadenosine hexaphosphate hydrolase.